The following is a 160-amino-acid chain: MSKEVVVESFELDHTIVKAPYVRLIGEETGPKGDIISNFDIRLVQPNEDSIPTAGLHTIEHLLAMLIRKRIDGMIDCSPFGCRTGFHMIMWGQHSSSQIAQVIKSCLEEIAESTSWEDVPGTTIESCGNYKDHSLFSAKEWAKLILSQGISDDAFERHVI.

Positions 57, 61, and 127 each coordinate Fe cation.

It belongs to the LuxS family. In terms of assembly, homodimer. It depends on Fe cation as a cofactor.

The enzyme catalyses S-(5-deoxy-D-ribos-5-yl)-L-homocysteine = (S)-4,5-dihydroxypentane-2,3-dione + L-homocysteine. In terms of biological role, involved in the synthesis of autoinducer 2 (AI-2) which is secreted by bacteria and is used to communicate both the cell density and the metabolic potential of the environment. The regulation of gene expression in response to changes in cell density is called quorum sensing. Catalyzes the transformation of S-ribosylhomocysteine (RHC) to homocysteine (HC) and 4,5-dihydroxy-2,3-pentadione (DPD). This is S-ribosylhomocysteine lyase from Streptococcus sanguinis (strain SK36).